The sequence spans 2488 residues: Neuron navigator 2 (2488 aa).

The Calponin-homology (CH) domain occupies 85–192 (GFDTQIYTDW…LFFSLSRYKQ (108 aa)). Low complexity-rich tracts occupy residues 194–204 (QQQPQKQHLSS), 221–247 (QAGTPQQQVPVTPQAPCQPHQPAPHQQ), and 255–267 (QSSASSKDSSQSK). Disordered regions lie at residues 194-675 (QQQP…GSNT) and 706-727 (TEGNVTAESSSTGVSVEPSHFT). Over residues 299 to 315 (GGSTTANNRRSQSFNNY) the composition is skewed to polar residues. The span at 356-369 (SGSSSTPTNCSTSS) shows a compositional bias: low complexity. Positions 384-396 (KSLSVKHSATVSM) are enriched in polar residues. A compositionally biased stretch (pro residues) spans 401–410 (PPGPEAPRPT). Positions 492–506 (RTFSRALTNKKSSLK) are enriched in polar residues. Residues 498–531 (LTNKKSSLKGNEKEKEKQQREKDKEKSKDLAKRA) are a coiled coil. Positions 507–547 (GNEKEKEKQQREKDKEKSKDLAKRASVTERLDLKEEPKEDP) are enriched in basic and acidic residues. A compositionally biased stretch (low complexity) spans 592 to 606 (MKSMPGKSPSAPAPS). Polar residues predominate over residues 615–626 (GKLSSGLPQQKP). 2 stretches are compositionally biased toward low complexity: residues 633–642 (SSSSSSLASS) and 657–675 (SSQTVSGSVGTTQTTGSNT). The segment covering 706–719 (TEGNVTAESSSTGV) has biased composition (polar residues). Positions 743–771 (EARRLRTVKNIADLRQNLEETMSSLRGTQ) form a coiled coil. 9 disordered regions span residues 804 to 824 (LSWRLGQSSPRLQAGDAPSMG), 939 to 1151 (LGLG…QSGS), 1177 to 1200 (KSSALVSRSAGRKSSMDGAQNQDD), 1213 to 1283 (YRSL…SDNE), 1295 to 1338 (PAAQ…PIAT), 1355 to 1412 (MTQQ…TNAS), 1440 to 1460 (SLSSGGVPSHNSSTGLIASSK), 1473 to 1560 (VKTT…VTSP), and 1591 to 1629 (SLSNADGQYDPYTDSRFRNSSMSLDEKSRTMSRSGSFRD). The span at 939–985 (LGLGDADSWDDSSSVSSGISDTIDNLSTDDINTSSSISSYANTPASS) shows a compositional bias: low complexity. Over residues 1091–1102 (KTDDAKVSEKGR) the composition is skewed to basic and acidic residues. Residues 1130-1142 (PSSSRTPTANANS) are compositionally biased toward polar residues. Residues 1220–1245 (SKSNSRNGAGNRSSTSSIDSNISSKS) are compositionally biased toward low complexity. The span at 1299–1309 (PVSSPAQTSLQ) shows a compositional bias: polar residues. Composition is skewed to low complexity over residues 1363–1380 (SPSGSGVLSSGSSSPLYS) and 1388–1404 (SPLASSPSSAHSAPSNS). Polar residues predominate over residues 1440-1456 (SLSSGGVPSHNSSTGLI). The segment covering 1477–1489 (LSESPLSSPAASP) has biased composition (low complexity). Ser1480, Ser1484, and Ser1488 each carry phosphoserine. Composition is skewed to basic and acidic residues over residues 1498 to 1510 (RKQDSDPHLDRNT) and 1526 to 1535 (TQEDAKEWLR). Residues 1549 to 1560 (SPFSSGSSVTSP) show a composition bias toward low complexity. A coiled-coil region spans residues 1686–1773 (EEKCQSEIRK…AAAQAAINGV (88 aa)). Disordered stretches follow at residues 1790–1887 (ADLR…LRNS) and 1951–1985 (AENDRLKSESQGSGCSRAPSQVSISASPRQSMGLS). Polar residues-rich tracts occupy residues 1800–1820 (SDSVSSINSATSHSSVGSNIE), 1875–1887 (NGSTGSTPLLRNS), and 1959–1985 (ESQGSGCSRAPSQVSISASPRQSMGLS). Residues 1897-1964 (MDSEAETVMQ…RLKSESQGSG (68 aa)) adopt a coiled-coil conformation. Residue Ser1977 is modified to Phosphoserine. 2157–2164 (GPSGTGKT) contributes to the ATP binding site. The interval 2423–2488 (DGYSMPREGS…ILDSSLESTL (66 aa)) is disordered. Over residues 2460 to 2473 (YSSPQSYDSDSNSN) the composition is skewed to low complexity.

It belongs to the Nav/unc-53 family. Highly expressed in the brain, kidney and liver. Also expressed in the thyroid, mammary gland, spinal cord, heart, placenta and lung. Abundantly expressed in colon cancers.

Its subcellular location is the nucleus. The catalysed reaction is ATP + H2O = ADP + phosphate + H(+). In terms of biological role, possesses 3' to 5' helicase activity and exonuclease activity. Involved in neuronal development, specifically in the development of different sensory organs. In Homo sapiens (Human), this protein is Neuron navigator 2 (NAV2).